A 116-amino-acid chain; its full sequence is Protein Wnt-5(I) (116 aa).

The O-palmitoleoyl serine; by PORCN moiety is linked to residue Ser1. Asn69 carries N-linked (GlcNAc...) asparagine glycosylation. Cysteines 82 and 97 form a disulfide.

Belongs to the Wnt family. Post-translationally, palmitoleoylation is required for efficient binding to frizzled receptors. Depalmitoleoylation leads to Wnt signaling pathway inhibition.

Its subcellular location is the secreted. The protein resides in the extracellular space. The protein localises to the extracellular matrix. In terms of biological role, ligand for members of the frizzled family of seven transmembrane receptors. Probable developmental protein. May be a signaling molecule which affects the development of discrete regions of tissues. Is likely to signal over only few cell diameters. The sequence is that of Protein Wnt-5(I) (WNT-5(I)) from Eptatretus stoutii (Pacific hagfish).